Reading from the N-terminus, the 492-residue chain is Beclin 1-associated autophagy-related key regulator (492 aa).

A Phosphoserine modification is found at serine 29. The segment at 43–58 (CPLCNTTRRRLTCAKC) is cysteine repeats. The stretch at 71 to 180 (DRERFIDKKE…KLGDLVEKKT (110 aa)) forms a coiled coil. The interval 410–473 (PGVAGESDES…PIASSSAGGM (64 aa)) is disordered. Residues 413-492 (AGESDESGDE…SWFKAYTGHR (80 aa)) form a BATS region. Residues 415–433 (ESDESGDERVSDEETDLGT) are compositionally biased toward acidic residues. A Phosphoserine modification is found at serine 416. Threonine 429 bears the Phosphothreonine mark. A compositionally biased stretch (low complexity) spans 448-473 (SQSVEVSQSQSTQASPPIASSSAGGM).

It belongs to the ATG14 family. In terms of assembly, forms homooligomers; homo-oligomerization is essential for the roles in membrane tethering and enhancement of SNARE-mediated fusion. Component of the PI3K (PI3KC3/PI3K-III/class III phosphatidylinositol 3-kinase) complex I (PI3KC3-C1) in which the core composed of the catalytic subunit PIK3C3, the regulatory subunit PIK3R4 and BECN1 is associated with ATG14. PI3KC3-C1 displays a V-shaped architecture with PIK3R4 serving as a bridge between PIK3C3 and the ATG14:BECN1 subcomplex. PI3KC3-C1 can associate with further regulatory subunits. Interacts with PIK3CB. Interacts (via coiled-coil domain) with BECN2 (via coiled-coil domain); this interaction is tighter than BECN2 self-association. Interacts with the STX17-SNAP29 binary t-SNARE complex. Interacts with NRBF2. Interacts with PIK3C3 and BECN1; this interaction is increased in the absence of TMEM39A. Interacts with STEEP1; the interaction is required for trafficking of STING1 from the endoplasmic reticulum. Interacts with ARMC3 (via ARM domains). In terms of processing, ubiquitinated via 'Lys-6', 'Lys-11' and 'Lys-63'-linked polyubiquitin chains on multiple lysines by MARCHF7, leading to ATG14 aggregation and loss of interaction with STX17.

The protein localises to the cytoplasm. It is found in the endoplasmic reticulum membrane. Its subcellular location is the preautophagosomal structure membrane. The protein resides in the cytoplasmic vesicle. It localises to the autophagosome membrane. Its function is as follows. Required for both basal and inducible autophagy. Determines the localization of the autophagy-specific PI3-kinase complex PI3KC3-C1. Plays a role in autophagosome formation and MAP1LC3/LC3 conjugation to phosphatidylethanolamine. Promotes BECN1 translocation from the trans-Golgi network to autophagosomes. Enhances PIK3C3 activity in a BECN1-dependent manner. Essential for the autophagy-dependent phosphorylation of BECN1. Stimulates the phosphorylation of BECN1, but suppresses the phosphorylation PIK3C3 by AMPK. Binds to STX17-SNAP29 binary t-SNARE complex on autophagosomes and primes it for VAMP8 interaction to promote autophagosome-endolysosome fusion. Modulates the hepatic lipid metabolism. This is Beclin 1-associated autophagy-related key regulator from Homo sapiens (Human).